We begin with the raw amino-acid sequence, 1159 residues long: CRISPR-associated endoribonuclease Cas13a (1159 aa).

The binds crRNA repeat and spacer stretch occupies residues 1-11 (MKVTKVGGISH). Residues 1–170 (MKVTKVGGIS…NNIEKVEGKS (170 aa)) form an NTD region. Binds crRNA repeat regions lie at residues 139–151 (NKIN…FEKN), 172–176 (RNIIY), 224–233 (REFYHEIIGR), 271–276 (QVFYKY), 294–297 (HFVE), and 301–305 (SQLLK). A helical-1 region spans residues 171-360 (KRNIIYDYYR…YNYYLQDGEI (190 aa)). The binds crRNA processing site stretch occupies residues 319-328 (KIKRIFEYQN). Binds crRNA repeat stretches follow at residues 336-340 (KLLNK) and 371-378 (QNEAFLRN). The HEPN-like fold 1-I stretch occupies residues 361-508 (ATSDFIARNR…SKKMFQNEIN (148 aa)). Residues R472 and H477 each act as for target RNA cleavage in the active site. Residues 509 to 751 (EKKLKLKIFR…EFLREIKLGN (243 aa)) form a helical-2 region. The segment at 519–522 (QLNS) is binds target RNA. Residues 547–558 (NKNIPFVPSFTK) are binds crRNA spacer. The tract at residues 590 to 597 (DAQIYLLK) is binds target RNA. The segment at 718–722 (KQEFD) is binds crRNA spacer. An HEPN-like fold 1-II region spans residues 752 to 813 (ILKYTERLNM…NLDNNRVTED (62 aa)). Residues 780-783 (SLEK) form a binds crRNA repeat region. The interval 804-810 (NLDNNRV) is binds crRNA spacer and target RNA. The linker stretch occupies residues 814 to 946 (FELEADEIGK…EYTHLKNKVE (133 aa)). Binds crRNA spacer stretches follow at residues 845 to 857 (KIYF…IKHR) and 938 to 942 (YTHLK). A coiled-coil region spans residues 880–946 (YKISIEELKK…EYTHLKNKVE (67 aa)). An HEPN-like fold 2 region spans residues 947–1159 (FNELNLLQGL…YKMEEKKSEN (213 aa)). The binds crRNA repeat stretch occupies residues 962–963 (HR). The binds 3'-end of target RNA, in adjacent protein stretch occupies residues 995-998 (FENK). Catalysis depends on for target RNA cleavage residues R1048 and H1053. Binds crRNA processing site stretches follow at residues 1072-1082 (RKLLSYDRKLK) and 1104-1108 (IGADK).

The protein belongs to the CRISPR-associated endoribonuclease Cas13a family. As to quaternary structure, crystals show the 3'-end of target RNA interacting with an adjacent protein molecule, and mutagenesis of those amino acid residues decreases target RNA cleavage, but it is not clear if this is physiological. It depends on a divalent metal cation as a cofactor.

Its activity is regulated as follows. Target RNA acts as an activator for non-specific ssRNA cleavage; the target RNA and complementary crRNA must both be at least 20 nucleotides long to activate the HEPN-like catalytic pocket for RNase activity. Functionally, CRISPR (clustered regularly interspaced short palindromic repeat), is an adaptive immune system that provides protection against mobile genetic elements (viruses, transposable elements and conjugative plasmids). CRISPR clusters contain sequences complementary to antecedent mobile elements (spacer sequences) and target invading nucleic acids. Unlike many single-component effectors, this CRISPR-Cas system targets RNA. CRISPR clusters are transcribed from pre-CRISPR RNA (crRNA) and processed into crRNA by this protein. pre-crRNA processing yields a 5'-OH and probably a 2',3'-cyclic phosphate. Also cleaves pre-crRNA from several other type VI-A CRISPR systems. Cleaves linear target ssRNA in a crRNA-dependent fashion, preferentially before U residues. Cleavage of target ssRNA is about 80-fold faster than pre-crRNA processing and uses a different active site. Binding a viable target RNA target activates this protein for non-specific RNA degradation in vitro (called collateral RNA degradation). Activation occurs with 10 fM target RNA. crRNA maturation is not essential for activation of RNA degradation, but lack of mature crRNA (due to mutagenesis) decreases activation levels. This system has a 3' protospacer flanking site in the target RNA (PFS), which is C and unavailable to base pair with crRNA (PFS is equivalent to PAM, the protospacer adjacent motif). This Leptotrichia buccalis (strain ATCC 14201 / DSM 1135 / JCM 12969 / NCTC 10249 / C-1013-b) protein is CRISPR-associated endoribonuclease Cas13a.